The primary structure comprises 318 residues: Ribosomal RNA small subunit methyltransferase H (318 aa).

Residues 34 to 36, Asp-53, Phe-82, Asp-103, and Gln-110 contribute to the S-adenosyl-L-methionine site; that span reads GGH.

This sequence belongs to the methyltransferase superfamily. RsmH family.

The protein resides in the cytoplasm. It carries out the reaction cytidine(1402) in 16S rRNA + S-adenosyl-L-methionine = N(4)-methylcytidine(1402) in 16S rRNA + S-adenosyl-L-homocysteine + H(+). Functionally, specifically methylates the N4 position of cytidine in position 1402 (C1402) of 16S rRNA. In Limosilactobacillus reuteri (strain DSM 20016) (Lactobacillus reuteri), this protein is Ribosomal RNA small subunit methyltransferase H.